The sequence spans 263 residues: Proliferating cellular nuclear antigen 1 (263 aa).

The DNA-binding element occupies 61–80 (RCDRNLSMGMNLGNMSKMLK).

The protein belongs to the PCNA family. Homo- and heterotrimer. Interacts with POLH, ATXR5 and ATXR6.

The protein localises to the nucleus. Functionally, this protein is an auxiliary protein of DNA polymerase delta and is involved in the control of eukaryotic DNA replication by increasing the polymerase's processibility during elongation of the leading strand. This is Proliferating cellular nuclear antigen 1 (PCNA) from Arabidopsis thaliana (Mouse-ear cress).